The chain runs to 101 residues: Movement protein (101 aa).

A helical transmembrane segment spans residues 30-50 (EVAILSFVALICIYLLYLWVL).

This sequence belongs to the mastrevirus movement protein family. Interacts with the capsid protein (CP). Part of a MP-CP-viral DNA complex.

Its subcellular location is the host membrane. Involved in the viral transport within, and between cells. The polypeptide is Movement protein (Maize streak virus genotype D (isolate Raw) (MSV)).